Here is a 714-residue protein sequence, read N- to C-terminus: Ribonucleoside-diphosphate reductase 2 subunit alpha (714 aa).

Residues Thr161, 177–178 (SC), Gly206, 386–390 (NLCSE), and 588–592 (PTGSI) contribute to the substrate site. A disulfide bond links Cys178 and Cys415. Residue Asn386 is the Proton acceptor of the active site. Residue Cys388 is the Cysteine radical intermediate of the active site. Glu390 acts as the Proton acceptor in catalysis.

It belongs to the ribonucleoside diphosphate reductase large chain family. As to quaternary structure, tetramer of two alpha and two beta subunits.

It catalyses the reaction a 2'-deoxyribonucleoside 5'-diphosphate + [thioredoxin]-disulfide + H2O = a ribonucleoside 5'-diphosphate + [thioredoxin]-dithiol. Its activity is regulated as follows. Under complex allosteric control mediated by deoxynucleoside triphosphates and ATP binding. The type of nucleotide bound at the specificity site determines substrate preference. It seems probable that ATP makes the enzyme reduce CDP and UDP, dGTP favors ADP reduction and dTTP favors GDP reduction. In terms of biological role, provides the precursors necessary for DNA synthesis. Catalyzes the biosynthesis of deoxyribonucleotides from the corresponding ribonucleotides. R1E contains the binding sites for both substrates and allosteric effectors and carries out the actual reduction of the ribonucleotide. The polypeptide is Ribonucleoside-diphosphate reductase 2 subunit alpha (nrdE) (Escherichia coli (strain K12)).